The primary structure comprises 353 residues: DNA polymerase IV (353 aa).

Positions I14–G198 constitute a UmuC domain. Mg(2+) contacts are provided by D18 and D116. The active site involves E117.

It belongs to the DNA polymerase type-Y family. Monomer. It depends on Mg(2+) as a cofactor.

The protein resides in the cytoplasm. The enzyme catalyses DNA(n) + a 2'-deoxyribonucleoside 5'-triphosphate = DNA(n+1) + diphosphate. In terms of biological role, poorly processive, error-prone DNA polymerase involved in untargeted mutagenesis. Copies undamaged DNA at stalled replication forks, which arise in vivo from mismatched or misaligned primer ends. These misaligned primers can be extended by PolIV. Exhibits no 3'-5' exonuclease (proofreading) activity. May be involved in translesional synthesis, in conjunction with the beta clamp from PolIII. The polypeptide is DNA polymerase IV (Streptococcus pneumoniae serotype 2 (strain D39 / NCTC 7466)).